Consider the following 258-residue polypeptide: Serine/arginine-rich splicing factor x16 (258 aa).

One can recognise an RRM domain in the interval 8–81 (RKVYVGDLGN…RRARVELSTG (74 aa)). Disordered regions lie at residues 81–113 (GKYA…GGRG) and 130–258 (CRER…VSRD). Residues 86 to 103 (SGGGGGGGGGGGGGGGLG) show a composition bias toward gly residues. The span at 104-113 (GRDRGGGGRG) shows a compositional bias: basic and acidic residues. A CCHC-type zinc finger spans residues 116–132 (KCYECGGRGHFARHCRE). 2 stretches are compositionally biased toward basic residues: residues 130–141 (CRERKARQRRRS) and 149–166 (STSR…RSRS). 2 stretches are compositionally biased toward basic and acidic residues: residues 180–197 (NGRD…HERN) and 210–221 (RRYEDEDDDRVR). 2 stretches are compositionally biased toward low complexity: residues 231–240 (RSASPAVRRG) and 249–258 (SSASRSVSRD).

In terms of assembly, interacts (via Arg/Ser-rich region) with Alsin2/CG7564, Rbp1 and Doa (via N-terminus). Highly phosphorylated. May be phosphorylated by the serine/threonine-protein kinase Doa.

The protein resides in the nucleus. In terms of biological role, serine/arginine-rich splicing factor (SR protein) involved in differential exon usage during RNA transcript processing, probably by binding exonic splicing enhancer elements and recruiting components of the splicing machinery. Binds RNA stem-loop structures with consensus sequence 5'-CCGUNUNKNW-3'. Regulator of genes involved in lipid and carbohydrate metabolism, the immune response and the response to xenobiotics. The protein is Serine/arginine-rich splicing factor x16 of Drosophila melanogaster (Fruit fly).